Reading from the N-terminus, the 122-residue chain is Large ribosomal subunit protein uL14 (122 aa).

It belongs to the universal ribosomal protein uL14 family. In terms of assembly, part of the 50S ribosomal subunit. Forms a cluster with proteins L3 and L19. In the 70S ribosome, L14 and L19 interact and together make contacts with the 16S rRNA in bridges B5 and B8.

In terms of biological role, binds to 23S rRNA. Forms part of two intersubunit bridges in the 70S ribosome. In Renibacterium salmoninarum (strain ATCC 33209 / DSM 20767 / JCM 11484 / NBRC 15589 / NCIMB 2235), this protein is Large ribosomal subunit protein uL14.